Reading from the N-terminus, the 312-residue chain is Testis-expressed protein 13B (312 aa).

This sequence belongs to the TEX13 family. As to expression, testis specific.

This chain is Testis-expressed protein 13B (TEX13B), found in Homo sapiens (Human).